The following is a 108-amino-acid chain: Zinc finger protein 475 (108 aa).

C2HC/C3H-type zinc fingers lie at residues 6–35 (PAVV…KWHN) and 79–108 (QLVP…KAAK). 8 residues coordinate Zn(2+): Cys-10, Cys-13, His-25, Cys-29, Cys-83, Cys-86, His-98, and Cys-102.

It depends on Zn(2+) as a cofactor.

This is Zinc finger protein 475 from Homo sapiens (Human).